The sequence spans 454 residues: tRNA modification GTPase MnmE (454 aa).

The (6S)-5-formyl-5,6,7,8-tetrahydrofolate site is built by Arg-23, Glu-80, and Lys-120. Residues 216 to 377 form the TrmE-type G domain; it reads GMKVVIAGRP…LRNHLKQSMG (162 aa). K(+) is bound at residue Asn-226. Residues 226-231, 245-251, 270-273, 335-338, and 358-360 each bind GTP; these read NAGKSS, TDIAGTT, DTAG, NKAD, and SAR. Ser-230 is a Mg(2+) binding site. Residues Thr-245, Ile-247, and Thr-250 each coordinate K(+). Thr-251 serves as a coordination point for Mg(2+). Residue Lys-454 coordinates (6S)-5-formyl-5,6,7,8-tetrahydrofolate.

It belongs to the TRAFAC class TrmE-Era-EngA-EngB-Septin-like GTPase superfamily. TrmE GTPase family. As to quaternary structure, homodimer. Heterotetramer of two MnmE and two MnmG subunits. K(+) serves as cofactor.

It is found in the cytoplasm. Its function is as follows. Exhibits a very high intrinsic GTPase hydrolysis rate. Involved in the addition of a carboxymethylaminomethyl (cmnm) group at the wobble position (U34) of certain tRNAs, forming tRNA-cmnm(5)s(2)U34. This Salmonella gallinarum (strain 287/91 / NCTC 13346) protein is tRNA modification GTPase MnmE.